A 314-amino-acid chain; its full sequence is Ribosome maturation factor RimP (314 aa).

Disordered stretches follow at residues Met1 to Ser20, Pro152 to Glu176, and Ala206 to Lys314. The span at Pro10 to Leu19 shows a compositional bias: polar residues. Positions Asp215 to Glu227 are enriched in acidic residues. A compositionally biased stretch (polar residues) spans Pro247–Ile256. 2 stretches are compositionally biased toward basic and acidic residues: residues Thr270–Glu279 and Ser303–Lys314.

The protein belongs to the RimP family.

The protein resides in the cytoplasm. Its function is as follows. Required for maturation of 30S ribosomal subunits. In Beijerinckia indica subsp. indica (strain ATCC 9039 / DSM 1715 / NCIMB 8712), this protein is Ribosome maturation factor RimP.